The primary structure comprises 93 residues: Large ribosomal subunit protein bL31B (93 aa).

Belongs to the bacterial ribosomal protein bL31 family. Type B subfamily. Part of the 50S ribosomal subunit.

This Pseudomonas syringae pv. tomato (strain ATCC BAA-871 / DC3000) protein is Large ribosomal subunit protein bL31B.